The primary structure comprises 156 residues: ATP synthase subunit b (156 aa).

Residues 7 to 29 (LIGQMGTFLVFWWFVNKVIWPMF) traverse the membrane as a helical segment.

The protein belongs to the ATPase B chain family. F-type ATPases have 2 components, F(1) - the catalytic core - and F(0) - the membrane proton channel. F(1) has five subunits: alpha(3), beta(3), gamma(1), delta(1), epsilon(1). F(0) has three main subunits: a(1), b(2) and c(10-14). The alpha and beta chains form an alternating ring which encloses part of the gamma chain. F(1) is attached to F(0) by a central stalk formed by the gamma and epsilon chains, while a peripheral stalk is formed by the delta and b chains.

The protein resides in the cell inner membrane. F(1)F(0) ATP synthase produces ATP from ADP in the presence of a proton or sodium gradient. F-type ATPases consist of two structural domains, F(1) containing the extramembraneous catalytic core and F(0) containing the membrane proton channel, linked together by a central stalk and a peripheral stalk. During catalysis, ATP synthesis in the catalytic domain of F(1) is coupled via a rotary mechanism of the central stalk subunits to proton translocation. Its function is as follows. Component of the F(0) channel, it forms part of the peripheral stalk, linking F(1) to F(0). This chain is ATP synthase subunit b, found in Dichelobacter nodosus (strain VCS1703A).